The following is a 188-amino-acid chain: Large ribosomal subunit protein eL18 (188 aa).

Lysine 119 participates in a covalent cross-link: Glycyl lysine isopeptide (Lys-Gly) (interchain with G-Cter in SUMO2). At serine 130 the chain carries Phosphoserine. Residues 150–188 (RHFGKAPGTPHSHTKPYVRSKGRKFERARGRRASRGYKN) are disordered. Threonine 158 bears the Phosphothreonine mark. Composition is skewed to basic residues over residues 161–171 (SHTKPYVRSKG) and 178–188 (RGRRASRGYKN). Lysine 164 is covalently cross-linked (Glycyl lysine isopeptide (Lys-Gly) (interchain with G-Cter in SUMO2)).

Belongs to the eukaryotic ribosomal protein eL18 family. Component of the large ribosomal subunit.

The protein resides in the cytoplasm. It localises to the cytosol. It is found in the rough endoplasmic reticulum. Its function is as follows. Component of the large ribosomal subunit. The ribosome is a large ribonucleoprotein complex responsible for the synthesis of proteins in the cell. In Bos taurus (Bovine), this protein is Large ribosomal subunit protein eL18 (RPL18).